We begin with the raw amino-acid sequence, 54 residues long: Putative ankyrin repeat protein RC0701 (54 aa).

An ANK repeat occupies 17 to 46 (SGKTPLDWYSDYNATKIVETLIKNGGNVSS).

This Rickettsia conorii (strain ATCC VR-613 / Malish 7) protein is Putative ankyrin repeat protein RC0701.